The following is a 465-amino-acid chain: MSSELMFNYTFSWPAGPKDVILTGTFDDWRGTLPLVKTAKGNFEITMPVKLANKDDTFQFKFIVDGVWCVSDSYKKEHVSEGIENNFLQITDLVETQEVAGASRIPEAGGLLCGKPPRSAGPPSTSNRKKNKRNNKKRRSKLKKKSTKNNKKSNESLDDNEEEDGVTGTTTEDVTGTSREETPLAEPTNVSKEAPGNFHILPIDQSADTTKSNGIIGGPGPVLVPNPGEIKEFTEIRDVDARELNERLNKKEEVPEPVAGPIVESSVTEKSPALPQADDPIVETKEVAHNVQELTPQVEAVTPLINEPEPLPTPEAQISIPESSKVEPVEGSLQSKLVEKRESTEGVLDGSKKVENKAKKDEEVFTLDPIVNKAPKLPLTDEQTAEGRKSPAVSEEKEKKKKQEKGSKEVKRSETSKEKKPSAKEVKKQTVKASKKQTASPLSSSTEEPKKKKTGFFGKLKKLFK.

Disordered stretches follow at residues 107–227 (EAGG…VPNP) and 247–276 (RLNKKEEVPEPVAGPIVESSVTEKSPALPQ). The span at 127-151 (NRKKNKRNNKKRRSKLKKKSTKNNK) shows a compositional bias: basic residues. 2 positions are modified to phosphoserine: Ser-153 and Ser-156. A compositionally biased stretch (acidic residues) spans 156 to 165 (SLDDNEEEDG). The segment at 160–161 (NE) is X-DNA-binding. The span at 166–177 (VTGTTTEDVTGT) shows a compositional bias: low complexity. Thr-182 is subject to Phosphothreonine. Residue Ser-271 is modified to Phosphoserine. Position 295 is a phosphothreonine (Thr-295). Positions 298–465 (VEAVTPLINE…FFGKLKKLFK (168 aa)) are disordered. A phosphoserine mark is found at Ser-319 and Ser-343. Over residues 337–363 (LVEKRESTEGVLDGSKKVENKAKKDEE) the composition is skewed to basic and acidic residues. Position 366 is a phosphothreonine (Thr-366). Composition is skewed to basic and acidic residues over residues 385 to 398 (AEGRKSPAVSEEKE) and 404 to 428 (EKGSKEVKRSETSKEKKPSAKEVKK). Ser-394 carries the phosphoserine modification. Ser-440 is subject to Phosphoserine. Over residues 451-465 (KKKTGFFGKLKKLFK) the composition is skewed to basic residues.

Belongs to the CRP1/MDG1 family. Post-translationally, cleaved in the vicinity of position 160 to give an X-DNA-binding N-terminal subpeptide and a non-DNA-binding C-terminal subpeptide.

Cruciform DNA-binding protein which exerts an enhancing effect on the cleavage of cruciform DNA (X-DNA) by endonuclease VII from bacteriophage T4. This is Cruciform DNA-recognizing protein 1 (CRP1) from Saccharomyces cerevisiae (strain Lalvin EC1118 / Prise de mousse) (Baker's yeast).